A 177-amino-acid polypeptide reads, in one-letter code: Protein GrpE (177 aa).

Composition is skewed to basic and acidic residues over residues 1 to 19 (MAKH…KETV) and 29 to 41 (SPEK…ANER). A disordered region spans residues 1-41 (MAKHKHEEHPEDVEVKETVETAEQAESASPEKSELELANER).

Belongs to the GrpE family. Homodimer.

It localises to the cytoplasm. In terms of biological role, participates actively in the response to hyperosmotic and heat shock by preventing the aggregation of stress-denatured proteins, in association with DnaK and GrpE. It is the nucleotide exchange factor for DnaK and may function as a thermosensor. Unfolded proteins bind initially to DnaJ; upon interaction with the DnaJ-bound protein, DnaK hydrolyzes its bound ATP, resulting in the formation of a stable complex. GrpE releases ADP from DnaK; ATP binding to DnaK triggers the release of the substrate protein, thus completing the reaction cycle. Several rounds of ATP-dependent interactions between DnaJ, DnaK and GrpE are required for fully efficient folding. The chain is Protein GrpE from Streptococcus gordonii (strain Challis / ATCC 35105 / BCRC 15272 / CH1 / DL1 / V288).